A 353-amino-acid chain; its full sequence is ATPase GET3 (353 aa).

26–33 (KGGVGKTT) is a binding site for ATP. The active site involves D57. The ATP site is built by E244 and N271. The Zn(2+) site is built by C284 and C287.

Belongs to the arsA ATPase family. Homodimer. Component of the Golgi to ER traffic (GET) complex, which is composed of GET1, GET2 and GET3. Within the complex, GET1 and GET2 form a heterotetramer which is stabilized by phosphatidylinositol binding and which binds to the GET3 homodimer. Interacts with the chloride channel protein GEF1.

The protein resides in the cytoplasm. The protein localises to the endoplasmic reticulum. Its subcellular location is the golgi apparatus. Its function is as follows. ATPase required for the post-translational delivery of tail-anchored (TA) proteins to the endoplasmic reticulum. Recognizes and selectively binds the transmembrane domain of TA proteins in the cytosol. This complex then targets to the endoplasmic reticulum by membrane-bound receptors GET1 and GET2, where the tail-anchored protein is released for insertion. This process is regulated by ATP binding and hydrolysis. ATP binding drives the homodimer towards the closed dimer state, facilitating recognition of newly synthesized TA membrane proteins. ATP hydrolysis is required for insertion. Subsequently, the homodimer reverts towards the open dimer state, lowering its affinity for the GET1-GET2 receptor, and returning it to the cytosol to initiate a new round of targeting. Cooperates with the HDEL receptor ERD2 to mediate the ATP-dependent retrieval of resident ER proteins that contain a C-terminal H-D-E-L retention signal from the Golgi to the ER. Involved in low-level resistance to the oxyanions arsenite and arsenate, and in heat tolerance. This Zygosaccharomyces rouxii (strain ATCC 2623 / CBS 732 / NBRC 1130 / NCYC 568 / NRRL Y-229) protein is ATPase GET3.